The chain runs to 638 residues: Protein NSP-INTERACTING KINASE 1 (638 aa).

Positions methionine 1–glycine 31 are cleaved as a signal peptide. Residues leucine 32–alanine 248 lie on the Extracellular side of the membrane. 2 N-linked (GlcNAc...) asparagine glycosylation sites follow: asparagine 92 and asparagine 103. 4 LRR repeats span residues leucine 104 to leucine 128, arginine 130 to leucine 152, glutamine 153 to asparagine 175, and threonine 177 to threonine 200. Asparagine 162, asparagine 175, asparagine 188, asparagine 219, and asparagine 231 each carry an N-linked (GlcNAc...) asparagine glycan. Residues isoleucine 249–leucine 269 traverse the membrane as a helical segment. At tryptophan 270–arginine 638 the chain is on the cytoplasmic side. Threonine 309 is modified (phosphothreonine). Positions phenylalanine 312–glutamate 593 constitute a Protein kinase domain. Residue leucine 318–valine 326 participates in ATP binding. Threonine 335 is modified (phosphothreonine). Lysine 340 contributes to the ATP binding site. 2 positions are modified to phosphoserine: serine 393 and serine 396. Residues tyrosine 422–leucine 502 are interaction with geminivirus NSP protein. Catalysis depends on aspartate 435, which acts as the Proton acceptor. Phosphothreonine occurs at positions 468, 469, and 474. Tyrosine 482 is subject to Phosphotyrosine. Serine 484 is modified (phosphoserine). Phosphothreonine is present on threonine 485. The residue at position 489 (serine 489) is a Phosphoserine. A Phosphothreonine modification is found at threonine 566.

It belongs to the protein kinase superfamily. Ser/Thr protein kinase family. Oligomer. Interacts with geminivirus nuclear shuttle protein (NSP). Interacts with RPL10A and RPL18B. Post-translationally, autophosphorylated. As to expression, expressed in seedlings, leaves, roots, stems and flowers.

Its subcellular location is the cell membrane. The enzyme catalyses L-seryl-[protein] + ATP = O-phospho-L-seryl-[protein] + ADP + H(+). It catalyses the reaction L-threonyl-[protein] + ATP = O-phospho-L-threonyl-[protein] + ADP + H(+). With respect to regulation, inhibited by the viral nuclear shuttle protein (NSP) that binds to the region required for oligomerization. In terms of biological role, involved in defense response to geminivirus and begomovirus infection via regulation of the nuclear trafficking of RPL10A. Phosphorylates RPL10A in vitro. Activation of NIK1 down-regulates cytosolic translation. The polypeptide is Protein NSP-INTERACTING KINASE 1 (Arabidopsis thaliana (Mouse-ear cress)).